A 205-amino-acid chain; its full sequence is MELNGLRVSRETQERLQHFAALFQKWAKTINLVAPSTLDDLWNRHIADSSQVFQIHPKPVIWADLGSGGGFPGVITAIFLAELQDGWVHLVESNHKKAAFLRTALRETNARGSVHSSRIEDAHAEIGECGAISARALADLDGLLEYSAPWMLGEKDCRGFFHKGRDYLREIDKARGRWEFDLLEHSSAVEQESVILEISNLRRLV.

S-adenosyl-L-methionine contacts are provided by residues G66, F71, 119-120, and R135; that span reads IE.

It belongs to the methyltransferase superfamily. RNA methyltransferase RsmG family.

The protein localises to the cytoplasm. It carries out the reaction guanosine(527) in 16S rRNA + S-adenosyl-L-methionine = N(7)-methylguanosine(527) in 16S rRNA + S-adenosyl-L-homocysteine. Its function is as follows. Specifically methylates the N7 position of guanine in position 527 of 16S rRNA. The polypeptide is Ribosomal RNA small subunit methyltransferase G (Rhizobium leguminosarum bv. trifolii (strain WSM2304)).